The chain runs to 142 residues: Putative pre-16S rRNA nuclease (142 aa).

The protein belongs to the YqgF nuclease family.

It localises to the cytoplasm. Its function is as follows. Could be a nuclease involved in processing of the 5'-end of pre-16S rRNA. The protein is Putative pre-16S rRNA nuclease of Lactobacillus delbrueckii subsp. bulgaricus (strain ATCC 11842 / DSM 20081 / BCRC 10696 / JCM 1002 / NBRC 13953 / NCIMB 11778 / NCTC 12712 / WDCM 00102 / Lb 14).